Reading from the N-terminus, the 508-residue chain is MGLPWYRVHTVVLNDPGRLLSVHIMHTALVSGWAGSMVLYELAVFDPSDPVLDPMWRQGMFVIPFMTRLGITNSWGGWSITGGTITNPGIWSYEGVAGAHIMLSGLCFLAAIWHWVYWDLEIFRDERTGKPSLDLPKIFGIHLFLAGVACFGFGAFHVTGLYGPGIWVSDPYGLTGKVQPVNPSWGAEGFDPFVPGGIASHHIAAGTLGILAGLFHLSVRPPQRLYKGLRMGNIETVLSSSIAAVFFAAFVVAGTMWYGSATTPIELFGPTRYQWDQGYFQQEIYRRVSAGLAENLSLSEAWSKIPEKLAFYDYIGNNPAKGGLFRAGSMDNGDGIAVGWLGHPVFRDKEGHELFVRRMPTFFETFPVVLVDGDGIVRADVPFRRAESKYSVEQVGVTVEFYGGELNGVSYSDPATVKKYARRAQLGEIFELDRATLKSDGVFRSSPRGWFTFGHASFALLFFFGHIWHGARTLFRDVFAGIDPDLDSQVEFGTFQKIGDPTTRRQAV.

6 consecutive transmembrane segments (helical) span residues 21-36 (SVHI…WAGS), 101-115 (IMLS…IWHW), 140-156 (GIHL…FGAF), 203-218 (IAAG…FHLS), 237-252 (VLSS…AFVV), and 457-472 (SFAL…HGAR).

The protein belongs to the PsbB/PsbC family. PsbB subfamily. As to quaternary structure, PSII is composed of 1 copy each of membrane proteins PsbA, PsbB, PsbC, PsbD, PsbE, PsbF, PsbH, PsbI, PsbJ, PsbK, PsbL, PsbM, PsbT, PsbX, PsbY, PsbZ, Psb30/Ycf12, at least 3 peripheral proteins of the oxygen-evolving complex and a large number of cofactors. It forms dimeric complexes. Requires Binds multiple chlorophylls. PSII binds additional chlorophylls, carotenoids and specific lipids. as cofactor.

The protein resides in the plastid. Its subcellular location is the chloroplast thylakoid membrane. In terms of biological role, one of the components of the core complex of photosystem II (PSII). It binds chlorophyll and helps catalyze the primary light-induced photochemical processes of PSII. PSII is a light-driven water:plastoquinone oxidoreductase, using light energy to abstract electrons from H(2)O, generating O(2) and a proton gradient subsequently used for ATP formation. The polypeptide is Photosystem II CP47 reaction center protein (Piper cenocladum (Ant piper)).